Here is a 383-residue protein sequence, read N- to C-terminus: Outer membrane protein Omp-EA (383 aa).

The first 21 residues, 1–21, serve as a signal peptide directing secretion; the sequence is MKRNILAVLIPALLAAGAANA. The Periplasmic portion of the chain corresponds to 22-30; that stretch reads AEIYNKDGN. The chain crosses the membrane as a beta stranded span at residues 31–45; the sequence is KLDLYGKVKAMRYLS. Residues 46–58 lie on the Extracellular side of the membrane; the sequence is DADSNASNNADKS. A beta stranded membrane pass occupies residues 59–70; it reads YTRIGFKGQTLI. Over 71–74 the chain is Periplasmic; it reads NDQL. Residues 75-86 form a beta stranded membrane-spanning segment; that stretch reads TGYGQWEYNFSL. The Extracellular segment spans residues 87–100; that stretch reads SNSESSSDAQSGNK. The beta stranded transmembrane segment at 101–109 threads the bilayer; the sequence is TRLGFAGLK. Residues 110 to 112 are Periplasmic-facing; that stretch reads LKD. Residues 113–122 traverse the membrane as a beta stranded segment; it reads YGSVDYGRNY. Topologically, residues 123–155 are extracellular; it reads GVIYDVEAFTDMMPEFGATGYTRTDTYMLTRGN. Residues 156-164 form a beta stranded membrane-spanning segment; the sequence is SMLTWRNSD. The Periplasmic segment spans residues 165–171; the sequence is FFGLVDG. The beta stranded transmembrane segment at 172 to 178 threads the bilayer; sequence LKIALQY. Residues 179–198 lie on the Extracellular side of the membrane; the sequence is QGKNEGSGTRATNVSNGDGY. Residues 199–206 form a beta stranded membrane-spanning segment; that stretch reads GASLSYKI. Residues 207–209 are Periplasmic-facing; that stretch reads VEG. Residues 210 to 219 form a beta stranded membrane-spanning segment; that stretch reads LTINGAMSSS. At 220 to 243 the chain is on the extracellular side; it reads NRLNANSASSTTSQKMAAYGSGGR. A beta stranded membrane pass occupies residues 244–252; sequence AEAWATGLK. Over 253-258 the chain is Periplasmic; that stretch reads YDANGV. The beta stranded transmembrane segment at 259-268 threads the bilayer; that stretch reads YLAGTYAETR. Over 269–296 the chain is Extracellular; the sequence is NTNPFSGASYTFAGNSTATAVSGYANKV. A beta stranded transmembrane segment spans residues 297–307; sequence QNTELVAQYQF. At 308–310 the chain is on the periplasmic side; sequence DSG. The chain crosses the membrane as a beta stranded span at residues 311-319; the sequence is LRPSLAYVQ. At 320–335 the chain is on the extracellular side; sequence TKAKDIENGIGDADLS. The chain crosses the membrane as a beta stranded span at residues 336–346; the sequence is KFVDVAATYYF. Residues 347–351 are Periplasmic-facing; it reads NKNMS. A beta stranded membrane pass occupies residues 352-361; that stretch reads AFVDYKVNLL. At 362 to 372 the chain is on the extracellular side; sequence SDSNKLHLNTD. A beta stranded transmembrane segment spans residues 373–383; it reads DIVAVGLVYQF.

This sequence belongs to the Gram-negative porin family. In terms of assembly, homotrimer.

The protein resides in the cell outer membrane. In terms of biological role, may play an important role in maintaining pathogenicity in plants. The polypeptide is Outer membrane protein Omp-EA (omp-EA) (Erwinia amylovora (Fire blight bacteria)).